Here is a 420-residue protein sequence, read N- to C-terminus: Glutamyl-tRNA reductase (420 aa).

Substrate contacts are provided by residues 49–52 (TCNR), serine 107, 112–114 (EPQ), and glutamine 118. Catalysis depends on cysteine 50, which acts as the Nucleophile. 187-192 (GAGETI) provides a ligand contact to NADP(+).

It belongs to the glutamyl-tRNA reductase family. In terms of assembly, homodimer.

The catalysed reaction is (S)-4-amino-5-oxopentanoate + tRNA(Glu) + NADP(+) = L-glutamyl-tRNA(Glu) + NADPH + H(+). Its pathway is porphyrin-containing compound metabolism; protoporphyrin-IX biosynthesis; 5-aminolevulinate from L-glutamyl-tRNA(Glu): step 1/2. Catalyzes the NADPH-dependent reduction of glutamyl-tRNA(Glu) to glutamate 1-semialdehyde (GSA). This Methylococcus capsulatus (strain ATCC 33009 / NCIMB 11132 / Bath) protein is Glutamyl-tRNA reductase.